The chain runs to 551 residues: Solute carrier family 22 member 13 (551 aa).

Topologically, residues 1 to 20 (MAQFVQVLAEIGDFGRFQIQ) are cytoplasmic. The helical transmembrane segment at 21 to 41 (LLILLCVLNFLSPFYFFAHVF) threads the bilayer. The Extracellular portion of the chain corresponds to 42–138 (MVLDEPHHCA…LVCDRKHLKD (97 aa)). Asn-57, Asn-61, Asn-92, and Asn-104 each carry an N-linked (GlcNAc...) asparagine glycan. Residues 139-159 (TTQSVFMAGLLVGTLMFGPLC) form a helical membrane-spanning segment. Topologically, residues 160–167 (DRIGRKAT) are cytoplasmic. A helical membrane pass occupies residues 168–188 (ILAQLLLFTLIGLATAFVPSF). Topologically, residues 189–195 (ELYMALR) are extracellular. The chain crosses the membrane as a helical span at residues 196–216 (FAVATAVAGLSFSNVTLLTEW). Residues 217–224 (VGPSWRTQ) lie on the Cytoplasmic side of the membrane. Residues 225–245 (AVVLAQCNFSLGQMVLAGLAY) traverse the membrane as a helical segment. Over 246-251 (GFRNWR) the chain is Extracellular. The chain crosses the membrane as a helical span at residues 252–272 (LLQITGTAPGLLLFFYFWALP). Topologically, residues 273–332 (ESARWLLTRGRMDEAIQLIQKAASVNRRKLSPELMNQLVPEKTGPSGNALDLFRHPQLRK) are cytoplasmic. The helical transmembrane segment at 333–353 (VTLIIFCVWFVDSLGYYGLSL) threads the bilayer. A topological domain (extracellular) is located at residue Gln-354. A helical membrane pass occupies residues 355-375 (VGDFGLDVYLTQLIFGAVEVP). Topologically, residues 376–397 (ARCSSIFMMQRFGRKWSQLGTL) are cytoplasmic. The chain crosses the membrane as a helical span at residues 398-418 (VLGGLMCIIIIFIPADLPVVV). Residues 419–427 (TMLAVVGKM) are Extracellular-facing. A helical membrane pass occupies residues 428–448 (ATAAAFTISYVYSAELFPTIL). The Cytoplasmic portion of the chain corresponds to 449-452 (RQTG). The helical transmembrane segment at 453–473 (MGLVGIFSRIGGILTPLVILL) threads the bilayer. The Extracellular portion of the chain corresponds to 474 to 478 (GEYHA). A helical membrane pass occupies residues 479 to 499 (ALPMLIYGSLPIVAGLLCTLL). Over 500-551 (PETHGQGLKDTLQDLELGPHPRSPKSVPSEKETEAKGRTSSPGVAFVSSTYF) the chain is Cytoplasmic. The interval 511 to 551 (LQDLELGPHPRSPKSVPSEKETEAKGRTSSPGVAFVSSTYF) is disordered. The segment covering 527–536 (PSEKETEAKG) has biased composition (basic and acidic residues). A compositionally biased stretch (polar residues) spans 537–551 (RTSSPGVAFVSSTYF).

This sequence belongs to the major facilitator (TC 2.A.1) superfamily. Organic cation transporter (TC 2.A.1.19) family. Glycosylated. Ubiquitous. Highly expressed in kidneys and to a weaker extent in brain, heart, and intestine. In kidneys, expressed in proximal convoluted tubule. In kidneys, also expressed in cortical collecting duct, whereas glomerulus and thick ascending limb exhibit no expression.

The protein resides in the apical cell membrane. It carries out the reaction urate(out) + (S)-lactate(in) = urate(in) + (S)-lactate(out). The enzyme catalyses urate(out) + succinate(in) = urate(in) + succinate(out). The catalysed reaction is urate(out) + glutathione(in) = urate(in) + glutathione(out). It catalyses the reaction nicotinate(in) + urate(out) = nicotinate(out) + urate(in). It carries out the reaction orotate(out) + a carboxylate(in) = orotate(in) + a carboxylate(out). Its function is as follows. Anion antiporter that mediates the transport of urate, orotate and nicotinate in exchange for organic or inorganic anions. Translocates urate and orotate across the apical membrane of proximal tubule epithelial cells and involved in urate renal reabsorption. Possibly involved in orotate renal reabsorption and nicotinate intestinal reabsorption. Mediates urate uptake by an exchange with organic anions such as (S)-lactate, succinate, glutathione and nicotinate. Urate and orotate transports are Cl(-)-dependent. Shows similar transport characteristics as the urate/orotate renal antiporter SLC22A12/URAT1 and may act as a compensator of SLC22A12/URAT1 in certain conditions. The protein is Solute carrier family 22 member 13 of Homo sapiens (Human).